A 523-amino-acid polypeptide reads, in one-letter code: Aldehyde oxidase GLOX (523 aa).

The signal sequence occupies residues 1–19; that stretch reads MILDAAIVALADLPGTWEL.

The protein resides in the secreted. It localises to the cell wall. The enzyme catalyses an aldehyde + O2 + H2O = a carboxylate + H2O2 + H(+). Functionally, catalyzes the oxidation of aldehydes to the corresponding carboxylate by coupling the reaction to the reduction of dioxygen to hydrogen peroxide. Substrates include glyoxal and other aldehydes. Involved in disease resistance against the grapevine powdery mildew E.necator. Is sufficient to confer disease resistance to E.necator. Can produce hydrogen peroxide in response to E.necator infection, and this may directly play a role in the defense mechanism during plant-pathogen interactions. The protein is Aldehyde oxidase GLOX of Vitis pseudoreticulata (Chinese wild grapevine).